The primary structure comprises 683 residues: Glycine--tRNA ligase beta subunit (683 aa).

Belongs to the class-II aminoacyl-tRNA synthetase family. Tetramer of two alpha and two beta subunits.

The protein resides in the cytoplasm. The catalysed reaction is tRNA(Gly) + glycine + ATP = glycyl-tRNA(Gly) + AMP + diphosphate. In Pseudomonas putida (strain W619), this protein is Glycine--tRNA ligase beta subunit.